The chain runs to 502 residues: AMP phosphorylase (502 aa).

Residues Gly168, 195–200 (SRAITS), and Thr204 contribute to the AMP site. The active-site Proton donor is the Asp257. AMP is bound by residues Ser265 and Lys289.

The protein belongs to the thymidine/pyrimidine-nucleoside phosphorylase family. Type 2 subfamily.

It carries out the reaction AMP + phosphate = alpha-D-ribose 1,5-bisphosphate + adenine. The catalysed reaction is CMP + phosphate = cytosine + alpha-D-ribose 1,5-bisphosphate. The enzyme catalyses UMP + phosphate = alpha-D-ribose 1,5-bisphosphate + uracil. Functionally, catalyzes the conversion of AMP and phosphate to adenine and ribose 1,5-bisphosphate (R15P). Exhibits phosphorylase activity toward CMP and UMP in addition to AMP. Functions in an archaeal AMP degradation pathway, together with R15P isomerase and RubisCO. The protein is AMP phosphorylase of Hyperthermus butylicus (strain DSM 5456 / JCM 9403 / PLM1-5).